Reading from the N-terminus, the 1009-residue chain is Type VII secretion system accessory factor EsaA (1009 aa).

A helical membrane pass occupies residues 7 to 27; that stretch reads IYALIVTLIIIIAIVSMIFFV. The span at 680–697 shows a compositional bias: basic and acidic residues; it reads TFAEEPQEPKIDKGKNDE. Residues 680 to 707 are disordered; it reads TFAEEPQEPKIDKGKNDEFNTMSSNLDK. 5 helical membrane passes run 822 to 842, 869 to 889, 903 to 923, 928 to 948, and 979 to 999; these read ISPT…AYIF, VITS…VGLI, KFIL…TYLL, SIGM…MNNL, and IGLV…LNMF.

The protein belongs to the EsaA family. In terms of assembly, homodimer. Interacts with EssB.

The protein resides in the cell membrane. Its function is as follows. Component of the type VII secretion system (Ess). Provides together with EssB and other components such as EssC and EssE a secretion platform across the cytoplasmic membrane in the host. The chain is Type VII secretion system accessory factor EsaA from Staphylococcus aureus (strain COL).